The sequence spans 90 residues: 10.1 kDa protein (90 aa).

This is 10.1 kDa protein from Pseudomonas aeruginosa (Bacteriophage Pf1).